The chain runs to 510 residues: ATP synthase subunit alpha 1 (510 aa).

An ATP-binding site is contributed by 169 to 176; it reads GDRQTGKT.

The protein belongs to the ATPase alpha/beta chains family. As to quaternary structure, F-type ATPases have 2 components, CF(1) - the catalytic core - and CF(0) - the membrane proton channel. CF(1) has five subunits: alpha(3), beta(3), gamma(1), delta(1), epsilon(1). CF(0) has three main subunits: a(1), b(2) and c(9-12). The alpha and beta chains form an alternating ring which encloses part of the gamma chain. CF(1) is attached to CF(0) by a central stalk formed by the gamma and epsilon chains, while a peripheral stalk is formed by the delta and b chains.

The protein localises to the cell inner membrane. It catalyses the reaction ATP + H2O + 4 H(+)(in) = ADP + phosphate + 5 H(+)(out). Produces ATP from ADP in the presence of a proton gradient across the membrane. The alpha chain is a regulatory subunit. This Marinomonas sp. (strain MWYL1) protein is ATP synthase subunit alpha 1.